The chain runs to 303 residues: 4-sulfomuconolactone hydrolase (303 aa).

The protein belongs to the metallo-dependent hydrolases superfamily. Sulfomuconolactone hydrolase family. In terms of assembly, monomer. Zn(2+) is required as a cofactor.

It catalyses the reaction 4-sulfomuconolactone + H2O = maleylacetate + sulfite + 2 H(+). With respect to regulation, completely inhibited by ZnCl(2) and CuCl(2). Involved in the degradation of 4-sulfocatechol which is a central intermediate in the degradation of substituted sulfonated benzenes. Catalyzes the hydrolytical desulfonation of 4-sulfomuconolactone to yield maleylacetate. The sequence is that of 4-sulfomuconolactone hydrolase from Hydrogenophaga intermedia.